Here is an 89-residue protein sequence, read N- to C-terminus: Small ribosomal subunit protein uS15 (89 aa).

This sequence belongs to the universal ribosomal protein uS15 family. Part of the 30S ribosomal subunit. Forms a bridge to the 50S subunit in the 70S ribosome, contacting the 23S rRNA.

In terms of biological role, one of the primary rRNA binding proteins, it binds directly to 16S rRNA where it helps nucleate assembly of the platform of the 30S subunit by binding and bridging several RNA helices of the 16S rRNA. Functionally, forms an intersubunit bridge (bridge B4) with the 23S rRNA of the 50S subunit in the ribosome. In Polynucleobacter asymbioticus (strain DSM 18221 / CIP 109841 / QLW-P1DMWA-1) (Polynucleobacter necessarius subsp. asymbioticus), this protein is Small ribosomal subunit protein uS15.